The sequence spans 408 residues: Ubiquitin-associated domain-containing protein 1 (408 aa).

In terms of domain architecture, Ubiquitin-like spans 14-98 (LRLQVCTMEG…LLLIKKRAPP (85 aa)). The disordered stretch occupies residues 100-119 (LPKMADVSAEEKRKQEQKAP). A compositionally biased stretch (basic and acidic residues) spans 108–119 (AEEKRKQEQKAP). A UBA 1 domain is found at 185-231 (DEDEEDRVDEIALRQLTEMGFPESRAVKALRLNHMSVTQAMEWLIEH). Residues 235–275 (PAVDAPLPGQTPSEAAAEAGASSAEATAGPSSEAGGEEAKD) form a disordered region. The segment covering 245–268 (TPSEAAAEAGASSAEATAGPSSEA) has biased composition (low complexity). The 41-residue stretch at 291-331 (RPDPRAVIALMEMGFDEKEVVDALRVNNNQQNAACEWLLGD) folds into the UBA 2 domain. An STI1 domain is found at 356-395 (NPVVQLGLTNPKTLLAFEDMLENPLNSTQWMNDPETGPVM).

As to quaternary structure, component of the KPC complex.

The protein localises to the cytoplasm. The protein operates within protein modification; protein ubiquitination. Its function is as follows. Non-catalytic component of the KPC complex, a E3 ubiquitin-protein ligase complex that mediates polyubiquitination of target proteins, such as CDKN1B and NFKB1. Within the KPC complex, UBAC1 acts as an adapter that promotes the transfer of target proteins that have been polyubiquitinated by RNF123/KPC1 to the 26S proteasome. The protein is Ubiquitin-associated domain-containing protein 1 (UBAC1) of Gallus gallus (Chicken).